The following is a 121-amino-acid chain: Small ribosomal subunit protein uS13 (121 aa).

A disordered region spans residues 92-121 (KRGLPVRGQRTRTNARTRKGPRRAAASLKK).

This sequence belongs to the universal ribosomal protein uS13 family. In terms of assembly, part of the 30S ribosomal subunit. Forms a loose heterodimer with protein S19. Forms two bridges to the 50S subunit in the 70S ribosome.

Functionally, located at the top of the head of the 30S subunit, it contacts several helices of the 16S rRNA. In the 70S ribosome it contacts the 23S rRNA (bridge B1a) and protein L5 of the 50S subunit (bridge B1b), connecting the 2 subunits; these bridges are implicated in subunit movement. Contacts the tRNAs in the A and P-sites. This Bordetella bronchiseptica (strain ATCC BAA-588 / NCTC 13252 / RB50) (Alcaligenes bronchisepticus) protein is Small ribosomal subunit protein uS13.